A 218-amino-acid chain; its full sequence is MIVPGNLFILSAPSGAGKSSLINALLKPDNQASARAMQVSISHTTRDARPGENNGEHYHFVSVEEFKKQISLNAFYEYAEVFGNYYGTSEAAIDAQLSQGIDVFLDIDWQGAQQVRMKKPGVTTIFISPPSKEELESRLRGRGQDSDEVIASRMAQAQAECSHYNEFDYVIVNDDFEQALLDLTTIVNNQRLKCRQQSIAQQSLFSKLLNIEAVEPTE.

A Guanylate kinase-like domain is found at 5–188 (GNLFILSAPS…ALLDLTTIVN (184 aa)). 12–19 (APSGAGKS) is an ATP binding site.

Belongs to the guanylate kinase family.

The protein localises to the cytoplasm. The enzyme catalyses GMP + ATP = GDP + ADP. In terms of biological role, essential for recycling GMP and indirectly, cGMP. This Colwellia psychrerythraea (strain 34H / ATCC BAA-681) (Vibrio psychroerythus) protein is Guanylate kinase.